The primary structure comprises 530 residues: Phosphoenolpyruvate carboxykinase (ATP) (530 aa).

Substrate-binding residues include Arg-58, Tyr-195, and Lys-201. Residues Lys-201, His-220, and 236–244 (GLSGTGKTT) contribute to the ATP site. Mn(2+)-binding residues include Lys-201 and His-220. Asp-257 is a binding site for Mn(2+). Residues Glu-285, Arg-321, 440–441 (RI), and Thr-446 each bind ATP. Arg-321 contributes to the substrate binding site.

It belongs to the phosphoenolpyruvate carboxykinase (ATP) family. Requires Mn(2+) as cofactor.

The protein resides in the cytoplasm. It catalyses the reaction oxaloacetate + ATP = phosphoenolpyruvate + ADP + CO2. The protein operates within carbohydrate biosynthesis; gluconeogenesis. In terms of biological role, involved in the gluconeogenesis. Catalyzes the conversion of oxaloacetate (OAA) to phosphoenolpyruvate (PEP) through direct phosphoryl transfer between the nucleoside triphosphate and OAA. This is Phosphoenolpyruvate carboxykinase (ATP) from Staphylococcus aureus (strain Mu3 / ATCC 700698).